Consider the following 293-residue polypeptide: 4-hydroxy-tetrahydrodipicolinate synthase (293 aa).

Residue Thr46 coordinates pyruvate. Catalysis depends on Tyr134, which acts as the Proton donor/acceptor. The active-site Schiff-base intermediate with substrate is Lys162. Ile204 contributes to the pyruvate binding site.

It belongs to the DapA family. In terms of assembly, homotetramer; dimer of dimers.

It localises to the cytoplasm. The enzyme catalyses L-aspartate 4-semialdehyde + pyruvate = (2S,4S)-4-hydroxy-2,3,4,5-tetrahydrodipicolinate + H2O + H(+). Its pathway is amino-acid biosynthesis; L-lysine biosynthesis via DAP pathway; (S)-tetrahydrodipicolinate from L-aspartate: step 3/4. Its function is as follows. Catalyzes the condensation of (S)-aspartate-beta-semialdehyde [(S)-ASA] and pyruvate to 4-hydroxy-tetrahydrodipicolinate (HTPA). This chain is 4-hydroxy-tetrahydrodipicolinate synthase, found in Bdellovibrio bacteriovorus (strain ATCC 15356 / DSM 50701 / NCIMB 9529 / HD100).